The chain runs to 212 residues: Protein-L-isoaspartate O-methyltransferase (212 aa).

Residue S61 is part of the active site.

The protein belongs to the methyltransferase superfamily. L-isoaspartyl/D-aspartyl protein methyltransferase family.

The protein localises to the cytoplasm. The enzyme catalyses [protein]-L-isoaspartate + S-adenosyl-L-methionine = [protein]-L-isoaspartate alpha-methyl ester + S-adenosyl-L-homocysteine. In terms of biological role, catalyzes the methyl esterification of L-isoaspartyl residues in peptides and proteins that result from spontaneous decomposition of normal L-aspartyl and L-asparaginyl residues. It plays a role in the repair and/or degradation of damaged proteins. The chain is Protein-L-isoaspartate O-methyltransferase from Pseudoalteromonas atlantica (strain T6c / ATCC BAA-1087).